Reading from the N-terminus, the 473-residue chain is 3-isopropylmalate dehydratase large subunit 2 (473 aa).

[4Fe-4S] cluster is bound by residues cysteine 350, cysteine 410, and cysteine 413.

The protein belongs to the aconitase/IPM isomerase family. LeuC type 1 subfamily. In terms of assembly, heterodimer of LeuC and LeuD. It depends on [4Fe-4S] cluster as a cofactor.

The catalysed reaction is (2R,3S)-3-isopropylmalate = (2S)-2-isopropylmalate. It functions in the pathway amino-acid biosynthesis; L-leucine biosynthesis; L-leucine from 3-methyl-2-oxobutanoate: step 2/4. Its function is as follows. Catalyzes the isomerization between 2-isopropylmalate and 3-isopropylmalate, via the formation of 2-isopropylmaleate. This chain is 3-isopropylmalate dehydratase large subunit 2, found in Salmonella choleraesuis (strain SC-B67).